A 1038-amino-acid polypeptide reads, in one-letter code: Activated CDC42 kinase 1 (1038 aa).

The tract at residues 1 to 110 (MQPEEGTGWL…TSPAPGGPAG (110 aa)) is SAM-like domain. A disordered region spans residues 90–114 (PPHHSQSTFRKTSPAPGGPAGEGPL). Residues 126–385 (LRLLEKLGDG…PTFVALRDFL (260 aa)) form the Protein kinase domain. ATP-binding positions include 132–140 (LGDGSFGVV) and lysine 158. The Proton acceptor role is filled by aspartate 252. Tyrosine 284 carries the phosphotyrosine; by SRC and autocatalysis modification. Residues 388–448 (AQPTDMRALQ…PRNVVTSVAG (61 aa)) form the SH3 domain. The 13-residue stretch at 454 to 466 (ISQPLQNSFIHTG) folds into the CRIB domain. The segment at 497 to 535 (LSVELSTSRPPQHLGGVKKPTYDPVSEDQDPLSSDFKRL) is disordered. Tyrosine 518 carries the post-translational modification Phosphotyrosine. Residues 623 to 652 (DWDARPLPPPPAYDDVAQDEDDFEICSINS) form a required for interaction with SRC region. Residues 632-635 (PPAY) are required for interaction with NEDD4. Disordered regions lie at residues 659–702 (VPAG…SSAQ) and 718–840 (LQAP…GPRA). A Phosphoserine modification is found at serine 724. An EBD domain region spans residues 733-876 (GDDKPQVPPR…SYLERYQRFL (144 aa)). Pro residues-rich tracts occupy residues 738 to 749 (QVPPRVPIPPRP), 772 to 783 (PASPPRVPPREP), and 794 to 805 (PLVPPGSSPLPP). Position 827 is a phosphotyrosine (tyrosine 827). Arginine 839 is subject to Omega-N-methylarginine. Residues tyrosine 859 and tyrosine 872 each carry the phosphotyrosine modification. The residue at position 881 (serine 881) is a Phosphoserine. The tract at residues 917-957 (LDPKANFSTNNSNPGARPPPPRATARLPQRGCPGDGPEAGR) is disordered. Residues 958-996 (PADKIQMAMVHGVTTEECQAALQCHGWSVQRAAQYLKVE) form the UBA domain.

This sequence belongs to the protein kinase superfamily. Tyr protein kinase family. Interacts with NEDD4 (via WW3 domain). NEDD4L and EGF promote association with NEDD4. Homodimer. Interacts with AR, CDC42, WWASL and WWOX. Interacts with CSPG4 (activated). Interacts with MERTK (activated); stimulates autophosphorylation. May interact (phosphorylated) with HSP90AB1; maintains kinase activity. Interacts with NPHP1. Interacts with SNX9 (via SH3 domain). Interacts with SRC (via SH2 and SH3 domain). Interacts with EGFR, and this interaction is dependent on EGF stimulation and kinase activity of EGFR. Interacts (via kinase domain) with AKT1. Part of a collagen stimulated complex involved in cell migration composed of CDC42, CRK, TNK2 and BCAR1/p130cas. Interacts with BCAR1/p130cas via SH3 domains. Forms complexes with GRB2 and numerous receptor tyrosine kinases (RTK) including LTK, AXL or PDGFRL, in which GRB2 promotes RTK recruitment by TNK2. It depends on Mg(2+) as a cofactor. Autophosphorylation regulates kinase activity. Phosphorylation on Tyr-518 is required for interaction with SRC and is observed during association with clathrin-coated pits. Post-translationally, polyubiquitinated by NEDD4 and NEDD4L. Degradation can be induced by EGF and is lysosome-dependent. In terms of tissue distribution, the Tyr-284 phosphorylated form shows a significant increase in expression in breast cancers during the progressive stages i.e. normal to hyperplasia (ADH), ductal carcinoma in situ (DCIS), invasive ductal carcinoma (IDC) and lymph node metastatic (LNMM) stages. It also shows a significant increase in expression in prostate cancers during the progressive stages.

The protein localises to the cell membrane. It is found in the nucleus. It localises to the endosome. The protein resides in the cell junction. Its subcellular location is the adherens junction. The protein localises to the cytoplasmic vesicle membrane. It is found in the cytoplasmic vesicle. It localises to the clathrin-coated vesicle. The protein resides in the membrane. Its subcellular location is the clathrin-coated pit. The protein localises to the cytoplasm. It is found in the perinuclear region. It localises to the cytosol. It catalyses the reaction L-tyrosyl-[protein] + ATP = O-phospho-L-tyrosyl-[protein] + ADP + H(+). It carries out the reaction L-seryl-[protein] + ATP = O-phospho-L-seryl-[protein] + ADP + H(+). The enzyme catalyses L-threonyl-[protein] + ATP = O-phospho-L-threonyl-[protein] + ADP + H(+). Inhibited by AIM-100 (4-amino-5,6-biaryl-furo[2,3-d]pyrimidine), which suppresses activating phosphorylation at Tyr-284. Repressed by dasatinib. Non-receptor tyrosine-protein and serine/threonine-protein kinase that is implicated in cell spreading and migration, cell survival, cell growth and proliferation. Transduces extracellular signals to cytosolic and nuclear effectors. Phosphorylates AKT1, AR, MCF2, WASL and WWOX. Implicated in trafficking and clathrin-mediated endocytosis through binding to epidermal growth factor receptor (EGFR) and clathrin. Binds to both poly- and mono-ubiquitin and regulates ligand-induced degradation of EGFR, thereby contributing to the accumulation of EGFR at the limiting membrane of early endosomes. Downstream effector of CDC42 which mediates CDC42-dependent cell migration via phosphorylation of BCAR1. May be involved both in adult synaptic function and plasticity and in brain development. Activates AKT1 by phosphorylating it on 'Tyr-176'. Phosphorylates AR on 'Tyr-267' and 'Tyr-363' thereby promoting its recruitment to androgen-responsive enhancers (AREs). Phosphorylates WWOX on 'Tyr-287'. Phosphorylates MCF2, thereby enhancing its activity as a guanine nucleotide exchange factor (GEF) toward Rho family proteins. Contributes to the control of AXL receptor levels. Confers metastatic properties on cancer cells and promotes tumor growth by negatively regulating tumor suppressor such as WWOX and positively regulating pro-survival factors such as AKT1 and AR. Phosphorylates WASP. In Homo sapiens (Human), this protein is Activated CDC42 kinase 1 (TNK2).